The following is a 418-amino-acid chain: Tol-Pal system protein TolB (418 aa).

The N-terminal stretch at Met1 to Ala21 is a signal peptide.

It belongs to the TolB family. As to quaternary structure, the Tol-Pal system is composed of five core proteins: the inner membrane proteins TolA, TolQ and TolR, the periplasmic protein TolB and the outer membrane protein Pal. They form a network linking the inner and outer membranes and the peptidoglycan layer.

It is found in the periplasm. In terms of biological role, part of the Tol-Pal system, which plays a role in outer membrane invagination during cell division and is important for maintaining outer membrane integrity. This is Tol-Pal system protein TolB from Wolbachia pipientis subsp. Culex pipiens (strain wPip).